A 337-amino-acid polypeptide reads, in one-letter code: Molybdate import system permease protein MolB (337 aa).

At 1–5 (MQPDS) the chain is on the cytoplasmic side. Residues 6–25 (YPKILFGLTLLLVITAVISL) traverse the membrane as a helical segment. Residues 26-51 (GIGRYSLSVPQIGQILWAKATALEID) lie on the Periplasmic side of the membrane. The helical transmembrane segment at 52–87 (PVQQQVIFQVRLPRILTALCVGAGLALSGVVLQGIF) threads the bilayer. The Cytoplasmic segment spans residues 88-98 (RNPLVNPHIIG). A helical transmembrane segment spans residues 99–113 (VTSGSAFGGTLAIFF). Over 114–116 (GFS) the chain is Periplasmic. Residues 117-140 (LYGLFTSTILFGFGTLALVFLFSF) form a helical membrane-spanning segment. At 141-146 (KFNQRS) the chain is on the cytoplasmic side. Residues 147 to 171 (LLMLILIGMILSGLFSALVSLLQYI) form a helical membrane-spanning segment. Residues 172-193 (SDTEEKLPSIVFWLMGSFATSN) lie on the Periplasmic side of the membrane. The helical transmembrane segment at 194–214 (WEKLLFFFVPFLLCSSILLSL) threads the bilayer. Residues 215–234 (SWRLNLLSLDEKEAKALGVK) lie on the Cytoplasmic side of the membrane. A helical membrane pass occupies residues 235-257 (MAPLRWLVIFLSGSLVACQVAIS). Topologically, residues 258–264 (GSIGWVG) are periplasmic. A helical transmembrane segment spans residues 265 to 275 (LIIPHLSRMLV). Residues 276 to 278 (GAN) lie on the Cytoplasmic side of the membrane. The chain crosses the membrane as a helical span at residues 279–304 (HQSLLPCTMLVGATYMLLVDNVARSL). Over 305-310 (SDAEIP) the chain is Periplasmic. The chain crosses the membrane as a helical span at residues 311–329 (ISILTALIGAPLFGVLVYK). Over 330–337 (LKRGGMNE) the chain is Cytoplasmic.

This sequence belongs to the binding-protein-dependent transport system permease family. FecCD subfamily. As to quaternary structure, the complex is composed of two ATP-binding proteins (MolC), two transmembrane proteins (MolB) and a solute-binding protein (MolA).

Its subcellular location is the cell inner membrane. The MolBCA complex shows a decrease in affinity in the presence of increasing concentrations of substrate and nucleotide. Functionally, part of the ABC transporter complex MolBCA involved in molybdate import. Responsible for the translocation of the substrate across the membrane. Functions as a low-affinity molybdate transporter. This Haemophilus influenzae (strain ATCC 51907 / DSM 11121 / KW20 / Rd) protein is Molybdate import system permease protein MolB.